The primary structure comprises 451 residues: MDRRYFGTDGIRGRVGRTPMTPDFALRLGWAAGRVLAPRGNGLVIIGKDTRVSGYMFESALEAGLSAAGTDIRLLGPMPTPAVAYLTRTFRASAGIVISASHNPFYDNGFKFFSAQGTKLPDEVELAIEAELEKPIETVDSADIGKAERVVDAAGRYIEFCKSTIPNGTAFHDLKLVVDCAHGATYAVAPSVFEELGAEVVAIGAEPDGFNINEKAGSLHPENLRAAVLAQRADAGIALDGDGDRLVLVDEQGEVLDGDEALCIIALARAGEGALGGGVVGTQMSNLGLELALKAQGIAFERAAVGDRYVMEMLQQRGWLLGGESSGHILCLDRTSTGDGIVSALQVLAIMQATGRPLSELRKVMAKFPQTLLNVPLNGGVARDALLSAKAVKEAVRAAEGALGGEGRVLLRPSGTEPLMRVMVEGRERRQVEQIAREIAEAVRSVADHAG.

S101 functions as the Phosphoserine intermediate in the catalytic mechanism. S101, D240, D242, and D244 together coordinate Mg(2+). S101 is modified (phosphoserine).

Belongs to the phosphohexose mutase family. Requires Mg(2+) as cofactor. Post-translationally, activated by phosphorylation.

It catalyses the reaction alpha-D-glucosamine 1-phosphate = D-glucosamine 6-phosphate. Its function is as follows. Catalyzes the conversion of glucosamine-6-phosphate to glucosamine-1-phosphate. The protein is Phosphoglucosamine mutase of Thioalkalivibrio sulfidiphilus (strain HL-EbGR7).